Reading from the N-terminus, the 368-residue chain is 3-dehydroquinate synthase (368 aa).

NAD(+) contacts are provided by residues 112–116 (GVIGD), 136–137 (TT), lysine 149, lysine 158, and 176–179 (TLIT). Residues glutamate 191, histidine 256, and histidine 273 each coordinate Zn(2+).

This sequence belongs to the sugar phosphate cyclases superfamily. Dehydroquinate synthase family. The cofactor is Co(2+). It depends on Zn(2+) as a cofactor. Requires NAD(+) as cofactor.

The protein localises to the cytoplasm. The catalysed reaction is 7-phospho-2-dehydro-3-deoxy-D-arabino-heptonate = 3-dehydroquinate + phosphate. It functions in the pathway metabolic intermediate biosynthesis; chorismate biosynthesis; chorismate from D-erythrose 4-phosphate and phosphoenolpyruvate: step 2/7. Catalyzes the conversion of 3-deoxy-D-arabino-heptulosonate 7-phosphate (DAHP) to dehydroquinate (DHQ). The protein is 3-dehydroquinate synthase of Prochlorococcus marinus (strain NATL2A).